The following is a 121-amino-acid chain: T cell receptor alpha variable 23/delta variable 6 (121 aa).

A signal peptide spans 1–21 (MDKILGASFLVLWLQLCWVSG). Residues 30-121 (QQVKQSPQSL…DSATYFCAAS (92 aa)) enclose the Ig-like domain. A disulfide bond links Cys-51 and Cys-118. Asn-95 carries N-linked (GlcNAc...) asparagine glycosylation.

In terms of assembly, alpha-beta TR is a heterodimer composed of an alpha and beta chain; disulfide-linked. The alpha-beta TR is associated with the transmembrane signaling CD3 coreceptor proteins to form the TR-CD3 (TcR or TCR). The assembly of alpha-beta TR heterodimers with CD3 occurs in the endoplasmic reticulum where a single alpha-beta TR heterodimer associates with one CD3D-CD3E heterodimer, one CD3G-CD3E heterodimer and one CD247 homodimer forming a stable octameric structure. CD3D-CD3E and CD3G-CD3E heterodimers preferentially associate with TR alpha and TR beta chains, respectively. The association of the CD247 homodimer is the last step of TcR assembly in the endoplasmic reticulum and is required for transport to the cell surface.

It localises to the cell membrane. Its function is as follows. V region of the variable domain of T cell receptor (TR) alpha chain that participates in the antigen recognition. Alpha-beta T cell receptors are antigen specific receptors which are essential to the immune response and are present on the cell surface of T lymphocytes. Recognize peptide-major histocompatibility (MH) (pMH) complexes that are displayed by antigen presenting cells (APC), a prerequisite for efficient T cell adaptive immunity against pathogens. Binding of alpha-beta TR to pMH complex initiates TR-CD3 clustering on the cell surface and intracellular activation of LCK that phosphorylates the ITAM motifs of CD3G, CD3D, CD3E and CD247 enabling the recruitment of ZAP70. In turn ZAP70 phosphorylates LAT, which recruits numerous signaling molecules to form the LAT signalosome. The LAT signalosome propagates signal branching to three major signaling pathways, the calcium, the mitogen-activated protein kinase (MAPK) kinase and the nuclear factor NF-kappa-B (NF-kB) pathways, leading to the mobilization of transcription factors that are critical for gene expression and essential for T cell growth and differentiation. The T cell repertoire is generated in the thymus, by V-(D)-J rearrangement. This repertoire is then shaped by intrathymic selection events to generate a peripheral T cell pool of self-MH restricted, non-autoaggressive T cells. Post-thymic interaction of alpha-beta TR with the pMH complexes shapes TR structural and functional avidity. The protein is T cell receptor alpha variable 23/delta variable 6 of Homo sapiens (Human).